A 356-amino-acid polypeptide reads, in one-letter code: MEYRRVKDQESYDVVSQKDIESPGERSLSSTSATSSLSTAGASKGNNSWKLKSIVTLALTLLTSSQAILIVWSKRAGKYEYSVTTANFSVEALKCLLSLIALYRTWNSQGVTEDNRLSTSFDEVSVYPIPAILYMVKNLLQYYIFAYVDAPAYQILKNLNIISTGVLYRIILKKKLSEIQWAAFILLCAGCTTAQLNPSSDHVLQTPIQGWVMAIVMALLSGFAGVYTEAIIKKRPSRNINVQNFWLYIFGMLFNLVAICVQDFDAVMNKGFFHGYSFITVLMILNHALSGIAVSMVMKYADNIVKVYSTSVAMLLTAVVSVFLFGFHLSLAFFLGSTVVSVSVYLHSVGKPQPQK.

Basic and acidic residues predominate over residues 1-24; that stretch reads MEYRRVKDQESYDVVSQKDIESPG. A disordered region spans residues 1–43; it reads MEYRRVKDQESYDVVSQKDIESPGERSLSSTSATSSLSTAGAS. Residues 1 to 52 lie on the Cytoplasmic side of the membrane; sequence MEYRRVKDQESYDVVSQKDIESPGERSLSSTSATSSLSTAGASKGNNSWKLK. Over residues 27–43 the composition is skewed to low complexity; it reads SLSSTSATSSLSTAGAS. Residues 53 to 73 form a helical membrane-spanning segment; that stretch reads SIVTLALTLLTSSQAILIVWS. Residues 74–82 lie on the Lumenal side of the membrane; sequence KRAGKYEYS. A helical membrane pass occupies residues 83-103; that stretch reads VTTANFSVEALKCLLSLIALY. At 104–125 the chain is on the cytoplasmic side; it reads RTWNSQGVTEDNRLSTSFDEVS. A helical membrane pass occupies residues 126 to 146; the sequence is VYPIPAILYMVKNLLQYYIFA. Over 147–149 the chain is Lumenal; it reads YVD. Residues 150–172 form a helical membrane-spanning segment; it reads APAYQILKNLNIISTGVLYRIIL. Topologically, residues 173–175 are cytoplasmic; it reads KKK. The chain crosses the membrane as a helical span at residues 176–196; sequence LSEIQWAAFILLCAGCTTAQL. The Lumenal segment spans residues 197-211; that stretch reads NPSSDHVLQTPIQGW. The chain crosses the membrane as a helical span at residues 212–232; sequence VMAIVMALLSGFAGVYTEAII. Topologically, residues 233-239 are cytoplasmic; it reads KKRPSRN. The chain crosses the membrane as a helical span at residues 240–260; that stretch reads INVQNFWLYIFGMLFNLVAIC. The Lumenal portion of the chain corresponds to 261–277; sequence VQDFDAVMNKGFFHGYS. A helical membrane pass occupies residues 278 to 298; it reads FITVLMILNHALSGIAVSMVM. Over 299–314 the chain is Cytoplasmic; it reads KYADNIVKVYSTSVAM. A helical membrane pass occupies residues 315–335; that stretch reads LLTAVVSVFLFGFHLSLAFFL. Residues 336-356 lie on the Lumenal side of the membrane; that stretch reads GSTVVSVSVYLHSVGKPQPQK.

It belongs to the nucleotide-sugar transporter family. CMP-Sialate:CMP antiporter (TC 2.A.7.12) subfamily.

It localises to the golgi apparatus membrane. Sugar transporter involved in the transport of CMP-sialic acid from the cytoplasm into the Golgi. May transport important nucleotide sugars such as CMP-Kdo (2-keto-3-deoxy-D-manno-octulosonic acid) in physiological conditions. This Oryza sativa subsp. indica (Rice) protein is CMP-sialic acid transporter 2.